We begin with the raw amino-acid sequence, 287 residues long: uncharacterized protein (287 aa).

An HTH araC/xylS-type domain is found at 183–281 (WEAARYLQEH…GISPIEYRKI (99 aa)). 2 DNA-binding regions (H-T-H motif) span residues 200-221 (KDLS…QQVL) and 248-271 (MGVI…KQIE).

This is an uncharacterized protein from Bacillus subtilis (strain 168).